A 426-amino-acid chain; its full sequence is uncharacterized protein (426 aa).

Belongs to the serpin family.

This is an uncharacterized protein from Methanosarcina mazei (strain ATCC BAA-159 / DSM 3647 / Goe1 / Go1 / JCM 11833 / OCM 88) (Methanosarcina frisia).